The following is a 383-amino-acid chain: Na(+)/H(+) antiporter NhaA (383 aa).

Helical transmembrane passes span 14-34 (AGGI…NSPL), 47-67 (FGMS…FLLI), 87-107 (IFPA…YVAF), 117-137 (GWAI…ALLG), 146-166 (VFLL…IALF), 171-191 (LSSM…MLNA), 205-225 (AILW…GVVI), 252-272 (VAFG…LEGV), 280-300 (MLPL…IFSF), 321-341 (IFAV…ISSL), and 356-376 (LGIL…LHFS).

It belongs to the NhaA Na(+)/H(+) (TC 2.A.33) antiporter family.

The protein localises to the cell inner membrane. It carries out the reaction Na(+)(in) + 2 H(+)(out) = Na(+)(out) + 2 H(+)(in). It catalyses the reaction Li(+)(in) + 2 H(+)(out) = Li(+)(out) + 2 H(+)(in). Activity is regulated by pH. Active at alkaline pH. Amiloride strongly reduces affinity for Na(+), but does not change the Vmax. In terms of biological role, na(+)/H(+) antiporter that extrudes sodium in exchange for external protons. Can also transport lithium and potassium. The polypeptide is Na(+)/H(+) antiporter NhaA (Vibrio parahaemolyticus serotype O3:K6 (strain RIMD 2210633)).